Here is a 194-residue protein sequence, read N- to C-terminus: Ras-related protein Rab-22A (194 aa).

Residue 12–20 participates in GTP binding; that stretch reads GDTGVGKSS. Residues 34-42 carry the Effector region motif; it reads INPTIGASF. Residues 60-64, 118-121, and 148-150 each bind GTP; these read DTAGQ, NKCD, and SAK. The tract at residues 170 to 194 is disordered; it reads DANPPSGGKGFKLRRQPSEPQRSCC. S-geranylgeranyl cysteine attachment occurs at residues C193 and C194.

It belongs to the small GTPase superfamily. Rab family. As to quaternary structure, interacts directly with ZFYVE20. Interacts (in its GTP-bound form) with RINL and RABGEF1. Binds EEA1.

It localises to the endosome membrane. The protein localises to the cell membrane. The protein resides in the early endosome. Its subcellular location is the late endosome. It is found in the cell projection. It localises to the ruffle. The protein localises to the cytoplasmic vesicle. The protein resides in the phagosome. Its subcellular location is the phagosome membrane. Its function is as follows. Plays a role in endocytosis and intracellular protein transport. Mediates trafficking of TF from early endosomes to recycling endosomes. Required for NGF-mediated endocytosis of NTRK1, and subsequent neurite outgrowth. Binds GTP and GDP and has low GTPase activity. Alternates between a GTP-bound active form and a GDP-bound inactive form. This is Ras-related protein Rab-22A (RAB22A) from Canis lupus familiaris (Dog).